We begin with the raw amino-acid sequence, 341 residues long: Heme A synthase (341 aa).

8 helical membrane-spanning segments follow: residues 8-28 (VIIW…VGGI), 92-112 (FHRF…VYFL), 126-146 (IVLL…VRSG), 160-180 (LHLT…LDLI), 201-221 (AALL…AGLI), 256-276 (VQFV…FLFF), 294-314 (LVVF…YSVP), and 315-335 (LALG…MTYT). His-260 is a binding site for heme. A heme-binding site is contributed by His-321.

It belongs to the COX15/CtaA family. Type 2 subfamily. As to quaternary structure, interacts with CtaB. Heme b serves as cofactor.

It localises to the cell membrane. The enzyme catalyses Fe(II)-heme o + 2 A + H2O = Fe(II)-heme a + 2 AH2. It functions in the pathway porphyrin-containing compound metabolism; heme A biosynthesis; heme A from heme O: step 1/1. Functionally, catalyzes the conversion of heme O to heme A by two successive hydroxylations of the methyl group at C8. The first hydroxylation forms heme I, the second hydroxylation results in an unstable dihydroxymethyl group, which spontaneously dehydrates, resulting in the formyl group of heme A. In Flavobacterium johnsoniae (strain ATCC 17061 / DSM 2064 / JCM 8514 / BCRC 14874 / CCUG 350202 / NBRC 14942 / NCIMB 11054 / UW101) (Cytophaga johnsonae), this protein is Heme A synthase.